The sequence spans 145 residues: MRADREELDLPPPVGGVAVDVVKVEVPATGRTLVLAFVKTCAVLAAVHGLYILHEVDLTTAHKEAEWEFEPLAWRVWLVVFYFGCLSLTVWLLEGSYGGSDHHAARAQSPDVRARRSELDDNIAQMGAVHGLELPRRQVLRHRGT.

The protein localises to the host cytoplasm. Its subcellular location is the host perinuclear region. The protein is I-leader protein of Human adenovirus C serotype 2 (HAdV-2).